We begin with the raw amino-acid sequence, 277 residues long: Intercellular adhesion molecule 2 (277 aa).

The signal sequence occupies residues 1–22 (MSSFACWSLSLLILFYSPGSGE). At 23-222 (KAFEVYIWSE…EVYEPMQDNQ (200 aa)) the chain is on the extracellular side. 2 consecutive Ig-like C2-type domains span residues 39 to 98 (TESW…CSGK) and 127 to 196 (GEDF…LDLR). Residues asparagine 45, asparagine 82, asparagine 158, asparagine 176, and asparagine 186 are each glycosylated (N-linked (GlcNAc...) asparagine). Cystine bridges form between cysteine 46–cysteine 91, cysteine 50–cysteine 95, and cysteine 134–cysteine 189. The helical transmembrane segment at 223–247 (MVIIIVVVSILLFLFVTSVLLCFIF) threads the bilayer. The Cytoplasmic segment spans residues 248 to 277 (GQHWHRRRTGTYGVLAAWRRLPRAFRARPV). The segment at 250–277 (HWHRRRTGTYGVLAAWRRLPRAFRARPV) is required for interaction with EZR, MSN and RDX and co-localization to microvilli.

It belongs to the immunoglobulin superfamily. ICAM family. In terms of assembly, interacts with RDX, EZR and MSN. As to expression, expressed in endothelial cells and leukocytes. High levels found in lung.

Its subcellular location is the membrane. It localises to the cell projection. The protein localises to the microvillus. Its function is as follows. ICAM proteins are ligands for the leukocyte adhesion protein LFA-1 (integrin alpha-L/beta-2). ICAM2 may play a role in lymphocyte recirculation by blocking LFA-1-dependent cell adhesion. It mediates adhesive interactions important for antigen-specific immune response, NK-cell mediated clearance, lymphocyte recirculation, and other cellular interactions important for immune response and surveillance. The sequence is that of Intercellular adhesion molecule 2 (Icam2) from Mus musculus (Mouse).